The following is a 435-amino-acid chain: Trigger factor (435 aa).

In terms of domain architecture, PPIase FKBP-type spans 161 to 246; the sequence is GDKLTLDFTG…IHKTEGPILP (86 aa).

It belongs to the FKBP-type PPIase family. Tig subfamily.

Its subcellular location is the cytoplasm. The catalysed reaction is [protein]-peptidylproline (omega=180) = [protein]-peptidylproline (omega=0). Its function is as follows. Involved in protein export. Acts as a chaperone by maintaining the newly synthesized protein in an open conformation. Functions as a peptidyl-prolyl cis-trans isomerase. In Colwellia psychrerythraea (strain 34H / ATCC BAA-681) (Vibrio psychroerythus), this protein is Trigger factor.